Consider the following 238-residue polypeptide: CASP-like protein 2BC2 (238 aa).

The Cytoplasmic segment spans residues M1–R66. The chain crosses the membrane as a helical span at residues L67–V87. Topologically, residues R88–K111 are extracellular. A helical membrane pass occupies residues A112–L132. Topologically, residues R133–P148 are cytoplasmic. A helical membrane pass occupies residues L149 to A169. The Extracellular portion of the chain corresponds to A170–Q200. A helical membrane pass occupies residues I201–M221. The Cytoplasmic portion of the chain corresponds to S222 to Q238.

Belongs to the Casparian strip membrane proteins (CASP) family. Homodimer and heterodimers.

Its subcellular location is the cell membrane. The sequence is that of CASP-like protein 2BC2 from Picea sitchensis (Sitka spruce).